Consider the following 149-residue polypeptide: Large ribosomal subunit protein bL9 (149 aa).

It belongs to the bacterial ribosomal protein bL9 family.

In terms of biological role, binds to the 23S rRNA. The polypeptide is Large ribosomal subunit protein bL9 (Campylobacter curvus (strain 525.92)).